The following is a 533-amino-acid chain: Beta-1,4 N-acetylgalactosaminyltransferase 1 (533 aa).

The Cytoplasmic portion of the chain corresponds to 1 to 7 (MWLGRRA). Residues 8 to 25 (LCALVLLLACASLGLLYA) form a helical; Signal-anchor for type II membrane protein membrane-spanning segment. Residues 26 to 533 (STRDAPGLRL…KHRLQCMTSQ (508 aa)) are Lumenal-facing. N-linked (GlcNAc...) asparagine glycosylation is found at asparagine 79, asparagine 179, and asparagine 274. A disulfide bridge connects residues cysteine 429 and cysteine 476.

It belongs to the glycosyltransferase 2 family. Homodimer; disulfide-linked.

It is found in the golgi apparatus membrane. It carries out the reaction a ganglioside GM3 (d18:1(4E)) + UDP-N-acetyl-alpha-D-galactosamine = a ganglioside GM2 (d18:1(4E)) + UDP + H(+). The catalysed reaction is a ganglioside GM3 + UDP-N-acetyl-alpha-D-galactosamine = a ganglioside GM2 + UDP + H(+). It catalyses the reaction a ganglioside GD3 + UDP-N-acetyl-alpha-D-galactosamine = a ganglioside GD2 + UDP + H(+). The enzyme catalyses a ganglioside GD3 (d18:1(4E)) + UDP-N-acetyl-alpha-D-galactosamine = a ganglioside GD2 (d18:1(4E)) + UDP + H(+). It carries out the reaction a beta-D-Gal-(1-&gt;4)-beta-D-Glc-(1&lt;-&gt;1)-Cer(d18:1(4E)) + UDP-N-acetyl-alpha-D-galactosamine = a ganglioside GA2 (d18:1(4E)) + UDP + H(+). The catalysed reaction is a ganglioside GD1a + UDP-N-acetyl-alpha-D-galactosamine = a ganglioside GalNAc-GD1a + UDP + H(+). It catalyses the reaction a ganglioside GT3 (d18:1(4E)) + UDP-N-acetyl-alpha-D-galactosamine = a ganglioside GT2 (d18:1(4E)) + UDP + H(+). The enzyme catalyses a beta-D-galactosyl-(1-&gt;4)-beta-D-glucosyl-(1&lt;-&gt;1)-ceramide + UDP-N-acetyl-alpha-D-galactosamine = a ganglioside GA2 + UDP + H(+). It carries out the reaction a neolactoside IV(3)-alpha-NeuGc-nLc4Cer + UDP-N-acetyl-alpha-D-galactosamine = a neolactoside IV(4)-beta-GalNAc-IV(3)-alpha-NeuGc-nLc4Cer + UDP + H(+). It functions in the pathway sphingolipid metabolism. Functionally, involved in the biosynthesis of gangliosides GM2, GD2, GT2 and GA2 from GM3, GD3, GT3 and GA3, respectively. This is Beta-1,4 N-acetylgalactosaminyltransferase 1 from Homo sapiens (Human).